Here is a 159-residue protein sequence, read N- to C-terminus: Peptide methionine sulfoxide reductase MsrB (159 aa).

In terms of domain architecture, MsrB spans 22–144 (RERLEANLTA…NSVSLQFVKA (123 aa)). Zn(2+)-binding residues include Cys61, Cys64, Cys110, and Cys113. Catalysis depends on Cys133, which acts as the Nucleophile.

The protein belongs to the MsrB Met sulfoxide reductase family. Zn(2+) serves as cofactor.

The catalysed reaction is L-methionyl-[protein] + [thioredoxin]-disulfide + H2O = L-methionyl-(R)-S-oxide-[protein] + [thioredoxin]-dithiol. In Caulobacter vibrioides (strain ATCC 19089 / CIP 103742 / CB 15) (Caulobacter crescentus), this protein is Peptide methionine sulfoxide reductase MsrB.